The sequence spans 517 residues: UDP-N-acetylmuramoylalanine--D-glutamate ligase (517 aa).

Residue 143 to 149 (GTNGKTT) participates in ATP binding.

The protein belongs to the MurCDEF family.

It is found in the cytoplasm. The catalysed reaction is UDP-N-acetyl-alpha-D-muramoyl-L-alanine + D-glutamate + ATP = UDP-N-acetyl-alpha-D-muramoyl-L-alanyl-D-glutamate + ADP + phosphate + H(+). It functions in the pathway cell wall biogenesis; peptidoglycan biosynthesis. Functionally, cell wall formation. Catalyzes the addition of glutamate to the nucleotide precursor UDP-N-acetylmuramoyl-L-alanine (UMA). The polypeptide is UDP-N-acetylmuramoylalanine--D-glutamate ligase (Leifsonia xyli subsp. xyli (strain CTCB07)).